Here is a 246-residue protein sequence, read N- to C-terminus: UDP-N-acetyl-D-mannosaminuronic acid transferase (246 aa).

The protein belongs to the glycosyltransferase 26 family.

The enzyme catalyses UDP-N-acetyl-alpha-D-mannosaminouronate + N-acetyl-alpha-D-glucosaminyl-di-trans,octa-cis-undecaprenyl diphosphate = beta-D-ManNAcA-(1-&gt;4)-alpha-D-GlcNAc-di-trans,octa-cis-undecaprenyl diphosphate + UDP + H(+). Its pathway is bacterial outer membrane biogenesis; enterobacterial common antigen biosynthesis. Catalyzes the synthesis of Und-PP-GlcNAc-ManNAcA (Lipid II), the second lipid-linked intermediate involved in enterobacterial common antigen (ECA) synthesis. The chain is UDP-N-acetyl-D-mannosaminuronic acid transferase from Escherichia coli O6:K15:H31 (strain 536 / UPEC).